The primary structure comprises 240 residues: Probable transcriptional regulatory protein MS53_0373 (240 aa).

The protein belongs to the TACO1 family.

Its subcellular location is the cytoplasm. This chain is Probable transcriptional regulatory protein MS53_0373, found in Mycoplasmopsis synoviae (strain 53) (Mycoplasma synoviae).